A 354-amino-acid chain; its full sequence is UDP-N-acetylglucosamine--N-acetylmuramyl-(pentapeptide) pyrophosphoryl-undecaprenol N-acetylglucosamine transferase (354 aa).

Residues 11 to 13 (TAG), Arg164, Ser194, and Gln289 each bind UDP-N-acetyl-alpha-D-glucosamine.

This sequence belongs to the glycosyltransferase 28 family. MurG subfamily.

The protein resides in the cell membrane. It carries out the reaction di-trans,octa-cis-undecaprenyl diphospho-N-acetyl-alpha-D-muramoyl-L-alanyl-D-glutamyl-meso-2,6-diaminopimeloyl-D-alanyl-D-alanine + UDP-N-acetyl-alpha-D-glucosamine = di-trans,octa-cis-undecaprenyl diphospho-[N-acetyl-alpha-D-glucosaminyl-(1-&gt;4)]-N-acetyl-alpha-D-muramoyl-L-alanyl-D-glutamyl-meso-2,6-diaminopimeloyl-D-alanyl-D-alanine + UDP + H(+). The protein operates within cell wall biogenesis; peptidoglycan biosynthesis. Cell wall formation. Catalyzes the transfer of a GlcNAc subunit on undecaprenyl-pyrophosphoryl-MurNAc-pentapeptide (lipid intermediate I) to form undecaprenyl-pyrophosphoryl-MurNAc-(pentapeptide)GlcNAc (lipid intermediate II). The protein is UDP-N-acetylglucosamine--N-acetylmuramyl-(pentapeptide) pyrophosphoryl-undecaprenol N-acetylglucosamine transferase of Clostridium botulinum (strain Langeland / NCTC 10281 / Type F).